A 1567-amino-acid polypeptide reads, in one-letter code: ABC multidrug transporter MDR1 (1567 aa).

The span at 1 to 11 (MASQPPQPPSG) shows a compositional bias: pro residues. Positions 1-37 (MASQPPQPPSGQPDTQYEEYQSEVITETTNRPTPAAD) are disordered. Over residues 22–32 (SEVITETTNRP) the composition is skewed to polar residues. 3 N-linked (GlcNAc...) asparagine glycosylation sites follow: asparagine 149, asparagine 157, and asparagine 356. The 266-residue stretch at 167-432 (VQYQDTFLSP…FEEMGWYCPP (266 aa)) folds into the ABC transporter 1 domain. 6 helical membrane passes run 543 to 563 (STIA…SLFF), 571 to 591 (GFFA…LMSI), 636 to 656 (IPIK…LGGL), 661 to 681 (AKFF…SAIF), 691 to 711 (IPQA…YTGF), and 798 to 818 (LGIL…VSEL). Residues asparagine 819, asparagine 895, and asparagine 912 are each glycosylated (N-linked (GlcNAc...) asparagine). The ABC transporter 2 domain occupies 891–1134 (FTWRNVTYDI…LLNYFETHGA (244 aa)). 927–934 (GVSGAGKT) contributes to the ATP binding site. Residues 1172–1202 (ESRHVQQELDRIQSETSKRNEGHGQSAEKEP) form a disordered region. A helical transmembrane segment spans residues 1231 to 1251 (IWGKLLLGLTSALFIGFSFFL). Residue asparagine 1253 is glycosylated (N-linked (GlcNAc...) asparagine). 5 helical membrane passes run 1257–1277 (AGLQ…SSLV), 1305–1325 (VFLL…GIIA), 1345–1365 (ILLL…QMII), 1372–1392 (ETAG…NGVL), and 1498–1518 (GIGW…YYLI).

This sequence belongs to the ABC transporter superfamily. ABCG family. PDR (TC 3.A.1.205) subfamily.

It localises to the cell membrane. It catalyses the reaction voriconazole(in) + ATP + H2O = voriconazole(out) + ADP + phosphate + H(+). It carries out the reaction fluconazole(in) + ATP + H2O = fluconazole(out) + ADP + phosphate + H(+). The catalysed reaction is (R)-miconazole(in) + ATP + H2O = (R)-miconazole(out) + ADP + phosphate + H(+). The enzyme catalyses (S)-miconazole(in) + ATP + H2O = (S)-miconazole(out) + ADP + phosphate + H(+). Pleiotropic ABC efflux transporter that may be involved in the modulation susceptibility to a wide range of unrelated cytotoxic compounds. The polypeptide is ABC multidrug transporter MDR1 (Trichophyton tonsurans (strain CBS 112818) (Scalp ringworm fungus)).